The sequence spans 330 residues: tRNA U34 carboxymethyltransferase (330 aa).

Carboxy-S-adenosyl-L-methionine contacts are provided by residues Lys91, Trp105, Lys110, Gly130, 152-154 (DPS), 181-182 (IE), Met196, Tyr200, and Arg315.

Belongs to the class I-like SAM-binding methyltransferase superfamily. CmoB family. In terms of assembly, homotetramer.

It catalyses the reaction carboxy-S-adenosyl-L-methionine + 5-hydroxyuridine(34) in tRNA = 5-carboxymethoxyuridine(34) in tRNA + S-adenosyl-L-homocysteine + H(+). Functionally, catalyzes carboxymethyl transfer from carboxy-S-adenosyl-L-methionine (Cx-SAM) to 5-hydroxyuridine (ho5U) to form 5-carboxymethoxyuridine (cmo5U) at position 34 in tRNAs. In Shewanella oneidensis (strain ATCC 700550 / JCM 31522 / CIP 106686 / LMG 19005 / NCIMB 14063 / MR-1), this protein is tRNA U34 carboxymethyltransferase.